Reading from the N-terminus, the 138-residue chain is Large ribosomal subunit protein uL16 (138 aa).

The segment covering 1 to 16 (MLIPKRVKYRRQHRPT) has biased composition (basic residues). Residues 1–23 (MLIPKRVKYRRQHRPTRSGVSKG) form a disordered region.

Belongs to the universal ribosomal protein uL16 family. In terms of assembly, part of the 50S ribosomal subunit.

In terms of biological role, binds 23S rRNA and is also seen to make contacts with the A and possibly P site tRNAs. This Corynebacterium aurimucosum (strain ATCC 700975 / DSM 44827 / CIP 107346 / CN-1) (Corynebacterium nigricans) protein is Large ribosomal subunit protein uL16.